The chain runs to 354 residues: MSDIQLRHDWKHDEIEALFALPMNDLLFKAHSLHRQVFDPNEVQISRLLSIKTGACPEDCKYCPQSARYDTGLEKERLIEIEKVLTEARSAKAAGASRFCMGAAWRNPHARDMPYLKDMVSEVKAMGMETCMTLGMLSGTQAEELAEAGLDYYNHNLDTSPEYYGEIITTRTYQDRLDTLSNVRSAGMKVCSGGIVGMGEQASDRAGLLQQLANMEQHPDSVPINMLVKVAGTPFENLDDLDPLEFVRTIAVARIIMPHSRVRLSAGREKMTDEMQAMCFFAGANSIFYGCKLLTTNNPEENEDMTLFKRLGLHPEQGKYATVEDDKEVMAKASAKANAIKDKQSGAFYDAGAL.

The 225-residue stretch at 41-265 (NEVQISRLLS…IMPHSRVRLS (225 aa)) folds into the Radical SAM core domain. [4Fe-4S] cluster-binding residues include Cys56, Cys60, and Cys63. Cys100, Cys131, Cys191, and Arg263 together coordinate [2Fe-2S] cluster.

Belongs to the radical SAM superfamily. Biotin synthase family. In terms of assembly, homodimer. [4Fe-4S] cluster is required as a cofactor. The cofactor is [2Fe-2S] cluster.

The enzyme catalyses (4R,5S)-dethiobiotin + (sulfur carrier)-SH + 2 reduced [2Fe-2S]-[ferredoxin] + 2 S-adenosyl-L-methionine = (sulfur carrier)-H + biotin + 2 5'-deoxyadenosine + 2 L-methionine + 2 oxidized [2Fe-2S]-[ferredoxin]. The protein operates within cofactor biosynthesis; biotin biosynthesis; biotin from 7,8-diaminononanoate: step 2/2. Catalyzes the conversion of dethiobiotin (DTB) to biotin by the insertion of a sulfur atom into dethiobiotin via a radical-based mechanism. This Shewanella sediminis (strain HAW-EB3) protein is Biotin synthase.